The primary structure comprises 95 residues: Co-chaperonin GroES (95 aa).

It belongs to the GroES chaperonin family. As to quaternary structure, heptamer of 7 subunits arranged in a ring. Interacts with the chaperonin GroEL.

Its subcellular location is the cytoplasm. In terms of biological role, together with the chaperonin GroEL, plays an essential role in assisting protein folding. The GroEL-GroES system forms a nano-cage that allows encapsulation of the non-native substrate proteins and provides a physical environment optimized to promote and accelerate protein folding. GroES binds to the apical surface of the GroEL ring, thereby capping the opening of the GroEL channel. This is Co-chaperonin GroES from Chlorobium luteolum (strain DSM 273 / BCRC 81028 / 2530) (Pelodictyon luteolum).